Reading from the N-terminus, the 216-residue chain is Large ribosomal subunit protein uL3 (216 aa).

At glutamine 157 the chain carries N5-methylglutamine.

It belongs to the universal ribosomal protein uL3 family. Part of the 50S ribosomal subunit. Forms a cluster with proteins L14 and L19. Post-translationally, methylated by PrmB.

One of the primary rRNA binding proteins, it binds directly near the 3'-end of the 23S rRNA, where it nucleates assembly of the 50S subunit. In Xanthomonas oryzae pv. oryzae (strain MAFF 311018), this protein is Large ribosomal subunit protein uL3.